A 974-amino-acid chain; its full sequence is Membrane-associated phosphatidylinositol transfer protein 3 (974 aa).

Phosphoserine is present on residues Ser30, Ser31, Ser109, Ser295, Ser298, Ser321, Ser343, and Ser495. The interval 284–304 (GDSPASSSRKGSISSTQDTPV) is disordered. Residues 292–302 (RKGSISSTQDT) show a composition bias toward polar residues. Disordered regions lie at residues 323-346 (IDIS…SDSS) and 491-536 (SSRD…SMAP). A DDHD domain is found at 390 to 594 (FDFDVSDFFL…VAFILRQVMR (205 aa)). Residues 520 to 533 (EGSSHSESSESSDS) are compositionally biased toward low complexity. Phosphoserine is present on residues Ser612, Ser907, Ser928, and Ser946. The disordered stretch occupies residues 927 to 974 (MSVQQPDPPAANPKPERAQSQPESDKDHERPLPALSWARGPPKFESVP).

Belongs to the PtdIns transfer protein family. PI transfer class IIA subfamily. As to quaternary structure, interacts with PTK2B via its C-terminus. Detected in brain and spleen, and at low levels in ovary.

It localises to the endomembrane system. Its function is as follows. Catalyzes the transfer of phosphatidylinositol and phosphatidylcholine between membranes (in vitro). Binds calcium ions. This is Membrane-associated phosphatidylinositol transfer protein 3 (PITPNM3) from Homo sapiens (Human).